The chain runs to 424 residues: Serine--tRNA ligase (424 aa).

An L-serine-binding site is contributed by Thr230–Glu232. Residue Arg261 to Glu263 participates in ATP binding. Glu284 serves as a coordination point for L-serine. An ATP-binding site is contributed by Glu348–Ser351. Ser384 serves as a coordination point for L-serine.

This sequence belongs to the class-II aminoacyl-tRNA synthetase family. Type-1 seryl-tRNA synthetase subfamily. In terms of assembly, homodimer. The tRNA molecule binds across the dimer.

It is found in the cytoplasm. The enzyme catalyses tRNA(Ser) + L-serine + ATP = L-seryl-tRNA(Ser) + AMP + diphosphate + H(+). It catalyses the reaction tRNA(Sec) + L-serine + ATP = L-seryl-tRNA(Sec) + AMP + diphosphate + H(+). The protein operates within aminoacyl-tRNA biosynthesis; selenocysteinyl-tRNA(Sec) biosynthesis; L-seryl-tRNA(Sec) from L-serine and tRNA(Sec): step 1/1. Functionally, catalyzes the attachment of serine to tRNA(Ser). Is also able to aminoacylate tRNA(Sec) with serine, to form the misacylated tRNA L-seryl-tRNA(Sec), which will be further converted into selenocysteinyl-tRNA(Sec). This chain is Serine--tRNA ligase, found in Streptococcus pneumoniae (strain Hungary19A-6).